The following is a 1285-amino-acid chain: Peroxisomal ATPase PEX1 (1285 aa).

Polar residues predominate over residues 344-353 (QQGKTKQSVM). The interval 344–373 (QQGKTKQSVMSPEKEKHPLESPNHKQIGSD) is disordered. Serine 354 is subject to Phosphoserine. Positions 355 to 373 (PEKEKHPLESPNHKQIGSD) are enriched in basic and acidic residues. ATP contacts are provided by residues 601–608 (GGKGSGKS) and 883–890 (GPPGTGKT). The span at 1142–1161 (NGTSSDLSSQCPSAPSSVTQ) shows a compositional bias: polar residues. The tract at residues 1142–1162 (NGTSSDLSSQCPSAPSSVTQD) is disordered. Serine 1183, serine 1211, and serine 1213 each carry phosphoserine. Residues 1262–1285 (FQNPKKRKNPSGTVFRPGQKVTLA) are disordered.

This sequence belongs to the AAA ATPase family. In terms of assembly, homooligomer; homooligomerizes in the cytosol, interaction with PEX6 promotes dissociation of the homooligomer. Interacts with PEX6; forming the PEX1-PEX6 AAA ATPase complex, which is composed of a heterohexamer formed by a trimer of PEX1-PEX6 dimers. Interacts indirectly with PEX26, via its interaction with PEX6.

The protein resides in the cytoplasm. Its subcellular location is the cytosol. It is found in the peroxisome membrane. It carries out the reaction ATP + H2O = ADP + phosphate + H(+). In terms of biological role, component of the PEX1-PEX6 AAA ATPase complex, a protein dislocase complex that mediates the ATP-dependent extraction of the PEX5 receptor from peroxisomal membranes, an essential step for PEX5 recycling. Specifically recognizes PEX5 monoubiquitinated at 'Cys-11', and pulls it out of the peroxisome lumen through the PEX2-PEX10-PEX12 retrotranslocation channel. Extraction by the PEX1-PEX6 AAA ATPase complex is accompanied by unfolding of the TPR repeats and release of bound cargo from PEX5. The protein is Peroxisomal ATPase PEX1 of Cricetulus griseus (Chinese hamster).